Reading from the N-terminus, the 216-residue chain is UPF0711 protein C18orf21 homolog (216 aa).

Disordered stretches follow at residues 118–185 and 197–216; these read RSFL…ASKT and SQSE…LSSL. A compositionally biased stretch (polar residues) spans 124–136; it reads LKSNPTTPTSKLS. A Phosphoserine modification is found at Ser126. Thr130 and Thr139 each carry phosphothreonine. 2 stretches are compositionally biased toward polar residues: residues 145–157 and 167–182; these read PSSA…SGSK and TPTS…SKNA. The segment covering 200–209 has biased composition (basic and acidic residues); sequence ESKKNPKMDF.

This sequence belongs to the UPF0711 family.

The chain is UPF0711 protein C18orf21 homolog from Bos taurus (Bovine).